We begin with the raw amino-acid sequence, 335 residues long: Biotin synthase (335 aa).

One can recognise a Radical SAM core domain in the interval K41–R269. Residues C56, C60, and C63 each coordinate [4Fe-4S] cluster. [2Fe-2S] cluster contacts are provided by C100, C132, C192, and R264.

Belongs to the radical SAM superfamily. Biotin synthase family. As to quaternary structure, homodimer. Requires [4Fe-4S] cluster as cofactor. [2Fe-2S] cluster is required as a cofactor.

The catalysed reaction is (4R,5S)-dethiobiotin + (sulfur carrier)-SH + 2 reduced [2Fe-2S]-[ferredoxin] + 2 S-adenosyl-L-methionine = (sulfur carrier)-H + biotin + 2 5'-deoxyadenosine + 2 L-methionine + 2 oxidized [2Fe-2S]-[ferredoxin]. It participates in cofactor biosynthesis; biotin biosynthesis; biotin from 7,8-diaminononanoate: step 2/2. Its function is as follows. Catalyzes the conversion of dethiobiotin (DTB) to biotin by the insertion of a sulfur atom into dethiobiotin via a radical-based mechanism. This is Biotin synthase from Nostoc sp. (strain PCC 7120 / SAG 25.82 / UTEX 2576).